We begin with the raw amino-acid sequence, 62 residues long: MARVCAITGRKARSGNSRSHAMNATKRKWGANLQKVRVRINGKVQRVYVSARALKSGKIERV.

The segment at 1 to 28 (MARVCAITGRKARSGNSRSHAMNATKRK) is disordered.

The protein belongs to the bacterial ribosomal protein bL28 family.

The protein is Large ribosomal subunit protein bL28 of Bacillus cytotoxicus (strain DSM 22905 / CIP 110041 / 391-98 / NVH 391-98).